Reading from the N-terminus, the 119-residue chain is Large ribosomal subunit protein bL20 (119 aa).

It belongs to the bacterial ribosomal protein bL20 family.

In terms of biological role, binds directly to 23S ribosomal RNA and is necessary for the in vitro assembly process of the 50S ribosomal subunit. It is not involved in the protein synthesizing functions of that subunit. The polypeptide is Large ribosomal subunit protein bL20 (Stenotrophomonas maltophilia (strain R551-3)).